The sequence spans 116 residues: MAYTITSQCISCKLCSSVCPTGAIKVAEDGQHWIDQALCTNCVDSVHTVPQCKAGCPTCDGCVKVPSDYWEGWFANYNRVIAKLTKKQDYWERWFNCYSQKFSEQIQKHQGEILGV.

A 4Fe-4S ferredoxin-type domain is found at alanine 2–aspartate 29. Iron-sulfur cluster is bound by residues cysteine 9, cysteine 12, cysteine 15, and cysteine 19.

In Trichormus azollae (Anabaena azollae), this protein is Ferredoxin-like protein in nif region (fdxN).